Consider the following 133-residue polypeptide: Holo-[acyl-carrier-protein] synthase (133 aa).

Aspartate 8 and glutamate 57 together coordinate Mg(2+).

The protein belongs to the P-Pant transferase superfamily. AcpS family. Requires Mg(2+) as cofactor.

The protein localises to the cytoplasm. The enzyme catalyses apo-[ACP] + CoA = holo-[ACP] + adenosine 3',5'-bisphosphate + H(+). Its function is as follows. Transfers the 4'-phosphopantetheine moiety from coenzyme A to a Ser of acyl-carrier-protein. In Bartonella bacilliformis (strain ATCC 35685 / KC583 / Herrer 020/F12,63), this protein is Holo-[acyl-carrier-protein] synthase.